The primary structure comprises 547 residues: Chaperonin GroEL (547 aa).

Residues 30 to 33, K51, 87 to 91, G415, 479 to 481, and D495 contribute to the ATP site; these read TLGP, DGTTT, and NAA.

It belongs to the chaperonin (HSP60) family. As to quaternary structure, forms a cylinder of 14 subunits composed of two heptameric rings stacked back-to-back. Interacts with the co-chaperonin GroES.

It is found in the cytoplasm. The enzyme catalyses ATP + H2O + a folded polypeptide = ADP + phosphate + an unfolded polypeptide.. Its function is as follows. Together with its co-chaperonin GroES, plays an essential role in assisting protein folding. The GroEL-GroES system forms a nano-cage that allows encapsulation of the non-native substrate proteins and provides a physical environment optimized to promote and accelerate protein folding. The chain is Chaperonin GroEL from Pseudomonas putida (strain GB-1).